Reading from the N-terminus, the 487-residue chain is MKALDELIFDNRFARLGDAFSTSVLSEPIETPRLVVASQSALALLDLAPEQADLPLFAEIFSGHKLWSEAEPRAMVYSGHQFGSYNPRLGDGRGLLLGEAYNDAGEHWDLHLKGAGRTPYSRMGDGRAVLRSSIREFLASEALHALGIPSSRAGCVVSSSTPVWRETQEHAAMVLRLAQSHVRFGSLEYFFYTKQPEQLKTLAEHVLTMHYPHCQEQPEPYLAMFREIVERNAELIAKWQAYGFCHGVMNTDNMSILGITFDFGPFAFLDDFDEHFICNHSDHEGRYSFSNQVPIAQWNLSALAQALTPFISVEALRETIGLFLPLYQAHYLDLMRRRLGLTIAQEQDEQLVSQLLKLMQNSGVDYTLFFRRLGDQPAAEALRTLRDDFVDIKGFDGWAEAYLARIAGEGKGTEQERQTRMHAVNPLYILRNYLAQNAIAAAEKGDYAEVRRLHQVLCTPFTEQPGMEGYAQRPPDWGKHLEISCSS.

The ATP site is built by glycine 90, glycine 92, arginine 93, lysine 113, aspartate 125, glycine 126, arginine 176, and arginine 183. The active-site Proton acceptor is the aspartate 252. Residues asparagine 253 and aspartate 262 each contribute to the Mg(2+) site. Aspartate 262 is an ATP binding site.

The protein belongs to the SELO family. Mg(2+) is required as a cofactor. Mn(2+) serves as cofactor.

The catalysed reaction is L-seryl-[protein] + ATP = 3-O-(5'-adenylyl)-L-seryl-[protein] + diphosphate. The enzyme catalyses L-threonyl-[protein] + ATP = 3-O-(5'-adenylyl)-L-threonyl-[protein] + diphosphate. It catalyses the reaction L-tyrosyl-[protein] + ATP = O-(5'-adenylyl)-L-tyrosyl-[protein] + diphosphate. It carries out the reaction L-histidyl-[protein] + UTP = N(tele)-(5'-uridylyl)-L-histidyl-[protein] + diphosphate. The catalysed reaction is L-seryl-[protein] + UTP = O-(5'-uridylyl)-L-seryl-[protein] + diphosphate. The enzyme catalyses L-tyrosyl-[protein] + UTP = O-(5'-uridylyl)-L-tyrosyl-[protein] + diphosphate. Functionally, nucleotidyltransferase involved in the post-translational modification of proteins. It can catalyze the addition of adenosine monophosphate (AMP) or uridine monophosphate (UMP) to a protein, resulting in modifications known as AMPylation and UMPylation. The polypeptide is Protein nucleotidyltransferase YdiU (Pseudomonas savastanoi pv. phaseolicola (strain 1448A / Race 6) (Pseudomonas syringae pv. phaseolicola (strain 1448A / Race 6))).